A 469-amino-acid chain; its full sequence is Dihydrolipoyl dehydrogenase (469 aa).

Residues 40-48, Lys-57, and Ala-120 each bind FAD; that span reads EKASLGGVC. Cys-48 and Cys-53 form a disulfide bridge. Residues 186 to 190, Glu-209, and 275 to 278 each bind NAD(+); these read GGGAI and AVGV. Residues Asp-317 and Ala-325 each contribute to the FAD site. Catalysis depends on His-450, which acts as the Proton acceptor.

Belongs to the class-I pyridine nucleotide-disulfide oxidoreductase family. In terms of assembly, homodimer. Requires FAD as cofactor.

The protein resides in the cytoplasm. It catalyses the reaction N(6)-[(R)-dihydrolipoyl]-L-lysyl-[protein] + NAD(+) = N(6)-[(R)-lipoyl]-L-lysyl-[protein] + NADH + H(+). Its function is as follows. Lipoamide dehydrogenase is a component of the alpha-ketoacid dehydrogenase complexes. This chain is Dihydrolipoyl dehydrogenase (lpd), found in Chlorobaculum parvum (strain DSM 263 / NCIMB 8327) (Chlorobium vibrioforme subsp. thiosulfatophilum).